The chain runs to 201 residues: MELVLKDAQSALTVSETTFGRDFNEALVHQVVVAYAAGARQGTRAQKTRAEVTGSGKKPWRQKGTGRARSGSIKSPIWRSGGVTFAARPQDHSQKVNKKMYRGALKSILSELVRQDRLIVVEKFSVEAPKTKLLAQKLKDMALDDVLIVTSEVDENLFLAARNLFKVDVRDVAGIDPVSLIAFDKVVMTADAVKQVEEMLA.

The segment at 44–71 (RAQKTRAEVTGSGKKPWRQKGTGRARSG) is disordered.

Belongs to the universal ribosomal protein uL4 family. In terms of assembly, part of the 50S ribosomal subunit.

Its function is as follows. One of the primary rRNA binding proteins, this protein initially binds near the 5'-end of the 23S rRNA. It is important during the early stages of 50S assembly. It makes multiple contacts with different domains of the 23S rRNA in the assembled 50S subunit and ribosome. In terms of biological role, forms part of the polypeptide exit tunnel. This Edwardsiella ictaluri (strain 93-146) protein is Large ribosomal subunit protein uL4.